We begin with the raw amino-acid sequence, 252 residues long: Thiamine thiazole synthase (252 aa).

NAD(+) contacts are provided by residues Ser35, 54 to 55 (EK), Gly62, Val126, and 152 to 154 (HVD). Fe cation-binding residues include Asp154 and His169. Met217 serves as a coordination point for NAD(+). Position 227 (Arg227) interacts with glycine.

This sequence belongs to the THI4 family. Homooctamer; tetramer of dimers. Fe(2+) serves as cofactor.

It catalyses the reaction hydrogen sulfide + glycine + NAD(+) = ADP-5-ethyl-4-methylthiazole-2-carboxylate + nicotinamide + 3 H2O + H(+). It functions in the pathway cofactor biosynthesis; thiamine diphosphate biosynthesis. Its function is as follows. Involved in the biosynthesis of the thiazole moiety of thiamine. Catalyzes the conversion of NAD and glycine to adenosine diphosphate 5-(2-hydroxyethyl)-4-methylthiazole-2-carboxylate (ADT), an adenylated thiazole intermediate, using free sulfide as a source of sulfur. In Pyrococcus abyssi (strain GE5 / Orsay), this protein is Thiamine thiazole synthase.